A 100-amino-acid chain; its full sequence is Urease subunit gamma (100 aa).

It belongs to the urease gamma subunit family. Heterotrimer of UreA (gamma), UreB (beta) and UreC (alpha) subunits. Three heterotrimers associate to form the active enzyme.

The protein localises to the cytoplasm. The enzyme catalyses urea + 2 H2O + H(+) = hydrogencarbonate + 2 NH4(+). It participates in nitrogen metabolism; urea degradation; CO(2) and NH(3) from urea (urease route): step 1/1. The chain is Urease subunit gamma from Teredinibacter turnerae (strain ATCC 39867 / T7901).